Reading from the N-terminus, the 204-residue chain is Prephenate decarboxylase (204 aa).

It belongs to the prephenate decarboxylase family.

It localises to the cytoplasm. The catalysed reaction is prephenate + H(+) = 3-[(4R)-4-hydroxycyclohexa-1,5-dien-1-yl]-2-oxopropanoate + CO2. It participates in antibiotic biosynthesis; bacilysin biosynthesis. Its function is as follows. Part of the bacABCDEF operon responsible for the biosynthesis of the nonribosomally synthesized dipeptide antibiotic bacilysin, composed of L-alanine and L-anticapsin. Bacilysin is an irreversible inactivator of the glutaminase domain of glucosamine synthetase. BacA is an unusual prephenate decarboxylase that avoids the typical aromatization of the cyclohexadienol ring of prephenate. BacA catalyzes the protonation of prephenate (1-carboxy-4-hydroxy-alpha-oxo-2,5-cyclohexadiene-1-propanoic acid) at C6 position, followed by a decarboxylation to produce the endocyclic-delta(4),delta(8)-7R-dihydro-hydroxyphenylpyruvate (en-H2HPP). En-H2HPP is able to undergo a slow nonenzymatic isomerization to produce the exocyclic-delta(3),delta(5)-dihydro-hydroxyphenylpyruvate (ex-H2HPP). BacA isomerizes only the pro-R double bond in prephenate. The protein is Prephenate decarboxylase of Bacillus amyloliquefaciens (Bacillus velezensis).